The chain runs to 873 residues: Mitogen-activated protein kinase kinase kinase kinase 3 (873 aa).

M1 carries the N-acetylmethionine modification. The region spanning 16–273 is the Protein kinase domain; it reads FELIQRIGSG…AEKLLQHPFV (258 aa). ATP contacts are provided by residues 22–30 and K45; that span reads IGSGTYGDV. Catalysis depends on D136, which acts as the Proton acceptor. Residues S329 and S377 each carry the phosphoserine modification. The segment at 389 to 518 is disordered; sequence AHLEDDEGDD…KPISNGLPPT (130 aa). The segment covering 452-466 has biased composition (pro residues); the sequence is HVPPRPPPPRLPPQK. Polar residues predominate over residues 487-499; sequence VHQQQSEQRGTNL. A CNH domain is found at 535 to 846; that stretch reads PLKIHCATSW…IFRLLGSDRV (312 aa).

The protein belongs to the protein kinase superfamily. STE Ser/Thr protein kinase family. STE20 subfamily. As to quaternary structure, interacts with SH3GL2. Interaction appears to regulate MAP4K3-mediated JNK activation. It depends on Mg(2+) as a cofactor.

It catalyses the reaction L-seryl-[protein] + ATP = O-phospho-L-seryl-[protein] + ADP + H(+). It carries out the reaction L-threonyl-[protein] + ATP = O-phospho-L-threonyl-[protein] + ADP + H(+). Functionally, serine/threonine kinase that plays a role in the response to environmental stress. Appears to act upstream of the JUN N-terminal pathway. Activator of the Hippo signaling pathway which plays a pivotal role in organ size control and tumor suppression by restricting proliferation and promoting apoptosis. MAP4Ks act in parallel to and are partially redundant with STK3/MST2 and STK4/MST2 in the phosphorylation and activation of LATS1/2, and establish MAP4Ks as components of the expanded Hippo pathway. The protein is Mitogen-activated protein kinase kinase kinase kinase 3 (Map4k3) of Rattus norvegicus (Rat).